We begin with the raw amino-acid sequence, 189 residues long: Large ribosomal subunit protein bL9 (189 aa).

It belongs to the bacterial ribosomal protein bL9 family.

Functionally, binds to the 23S rRNA. This is Large ribosomal subunit protein bL9 from Brucella ovis (strain ATCC 25840 / 63/290 / NCTC 10512).